We begin with the raw amino-acid sequence, 745 residues long: Probable xyloglucan glycosyltransferase 3 (745 aa).

2 consecutive transmembrane segments (helical) span residues 116 to 136 (GFLL…LKGW) and 196 to 216 (IDYI…LFMV). The active site involves Asp-300. The substrate site is built by Asp-359 and Asp-361. Asp-453 is a catalytic residue. A run of 4 helical transmembrane segments spans residues 531–551 (LILP…TMFV), 556–576 (LPIW…ILPA), 695–715 (IFKK…RSLL), and 720–740 (LHFY…LDLI).

Belongs to the glycosyltransferase 2 family. Plant cellulose synthase-like C subfamily.

The protein localises to the golgi apparatus membrane. Probable beta-1,4-glucan synthase rather involved in the synthesis of the xyloglucan backbone than cellulose. Seems to work simultaneously with xyloglucan 6-xylosyltransferase. Xyloglucan is a noncellulosic polysaccharides of plant cell wall and consists of a glucan backbone substituted by xylose, galactose and fucose. The sequence is that of Probable xyloglucan glycosyltransferase 3 (CSLC3) from Oryza sativa subsp. japonica (Rice).